Reading from the N-terminus, the 396-residue chain is Phosphoglycerate kinase (396 aa).

Residues 21-23 (DLN), R36, 59-62 (HLGR), R113, and R146 each bind substrate. ATP is bound by residues K197, E319, and 345–348 (GGDT).

Belongs to the phosphoglycerate kinase family. Monomer.

The protein localises to the cytoplasm. The enzyme catalyses (2R)-3-phosphoglycerate + ATP = (2R)-3-phospho-glyceroyl phosphate + ADP. It participates in carbohydrate degradation; glycolysis; pyruvate from D-glyceraldehyde 3-phosphate: step 2/5. In Legionella pneumophila (strain Paris), this protein is Phosphoglycerate kinase.